Here is a 676-residue protein sequence, read N- to C-terminus: Basic proline-rich protein (676 aa).

An N-terminal signal peptide occupies residues 1–16 (MLPILLSVALLALSSA). S28 and S30 each carry phosphoserine. A disordered region spans residues 29-676 (NSAEKFLRPP…PRPPPGPPPQ (648 aa)). Composition is skewed to pro residues over residues 36 to 50 (RPPP…PPPE), 71 to 424 (GPAP…PPAD), and 442 to 676 (PPPA…PPPQ). Positions 409–457 (APPGARPPPPPPPPADEPQQGPAPSGDKPKKKPPPPAGPPPPGPPSPGP) are excised as a propeptide.

As to expression, acinar cells and secretory granules of the parotid gland.

It is found in the secreted. Functionally, the parotid hormone stimulates dentinal fluid transport in teeth. This chain is Basic proline-rich protein, found in Sus scrofa (Pig).